We begin with the raw amino-acid sequence, 368 residues long: Ferrochelatase (368 aa).

Histidine 209 and glutamate 290 together coordinate Fe cation.

This sequence belongs to the ferrochelatase family.

The protein localises to the cytoplasm. The catalysed reaction is heme b + 2 H(+) = protoporphyrin IX + Fe(2+). The protein operates within porphyrin-containing compound metabolism; protoheme biosynthesis; protoheme from protoporphyrin-IX: step 1/1. Its function is as follows. Catalyzes the ferrous insertion into protoporphyrin IX. This Herminiimonas arsenicoxydans protein is Ferrochelatase.